Here is a 139-residue protein sequence, read N- to C-terminus: Small ribosomal subunit protein uS19 (139 aa).

Belongs to the universal ribosomal protein uS19 family.

In terms of biological role, protein S19 forms a complex with S13 that binds strongly to the 16S ribosomal RNA. This chain is Small ribosomal subunit protein uS19, found in Ignicoccus hospitalis (strain KIN4/I / DSM 18386 / JCM 14125).